An 87-amino-acid polypeptide reads, in one-letter code: Elastase inhibitor AFLEI (87 aa).

The N-terminal stretch at 1–19 is a signal peptide; sequence MKFSLACLLALAGLQAALA. A disulfide bridge links Cys-24 with Cys-86.

It is found in the secreted. Its function is as follows. Elastase inhibitor. In Aspergillus fumigatus (strain CBS 144.89 / FGSC A1163 / CEA10) (Neosartorya fumigata), this protein is Elastase inhibitor AFLEI.